We begin with the raw amino-acid sequence, 375 residues long: Alpha-2,8-sialyltransferase 8B (375 aa).

The Cytoplasmic portion of the chain corresponds to 1–6; sequence MQLQFR. A helical; Signal-anchor for type II membrane protein membrane pass occupies residues 7–23; it reads SWMLAALTLLVVFLIFA. Topologically, residues 24–375 are lumenal; the sequence is DISEIEEEIG…LTVGQCDGAT (352 aa). N-linked (GlcNAc...) asparagine glycosylation is found at Asn-60, Asn-72, Asn-89, and Asn-134. 2 cysteine pairs are disulfide-bonded: Cys-157-Cys-307 and Cys-171-Cys-371. The CMP-N-acetyl-beta-neuraminate site is built by Asn-162 and Asn-185. Residues Asn-219 and Asn-234 are each glycosylated (N-linked (GlcNAc...) asparagine). Residues Thr-294, Thr-295, Gly-296, Trp-316, Tyr-329, and His-330 each coordinate CMP-N-acetyl-beta-neuraminate. Residue His-346 is the Proton donor/acceptor of the active site.

This sequence belongs to the glycosyltransferase 29 family. Autopolysialylated. Autopolysialylation is not a prerequisite for the polysialylation acitity, but enhances the polysialylation acitity.

The protein localises to the golgi apparatus membrane. Its subcellular location is the secreted. It is found in the cell membrane. It catalyses the reaction [N-acetyl-alpha-D-neuraminosyl-(2-&gt;8)](n) + CMP-N-acetyl-beta-neuraminate = [N-acetyl-alpha-D-neuraminosyl-(2-&gt;8)](n+1) + CMP + H(+). Its pathway is protein modification; protein glycosylation. Its function is as follows. Catalyzes the transfer of a sialic acid from a CMP-linked sialic acid donor onto a terminal alpha-2,3-, alpha-2,6-, or alpha-2,8-linked sialic acid of an N-linked glycan acceptor through alpha-2,8-linkages. Therefore, participates in polysialic acid synthesis on various sialylated N-acetyllactosaminyl oligosaccharides (alpha-2,3-, alpha-2,6-, or alpha-2,8-linked sialic acid), including NCAM1, NCAM1 N-glycans, FETUB N-glycans, and to a lesser extent sialylparagloboside (SPG) and AHSG, which does not require the initial addition of an alpha 2,8-sialic acid. However, does not exhibit sialic acid-polymerase activity. Catalyzes polysialic acid synthesis in the hippocampal on NCAM1 and supports neurite outgrowth. ST8SIA2-mediated polysialylation influences on oligodendrocyte differentiation and may promote the integrity of myelin and axons. This chain is Alpha-2,8-sialyltransferase 8B, found in Pan troglodytes (Chimpanzee).